A 361-amino-acid polypeptide reads, in one-letter code: Tryptophan--tRNA ligase, mitochondrial (361 aa).

The transit peptide at 1–16 (MAKLPKITSLLPHSRV) directs the protein to the mitochondrion. ATP is bound by residues Gln21 and 27–30 (HIGN). Residues 22 to 30 (PTGIPHIGN) carry the 'HIGH' region motif. Asp165 is a binding site for L-tryptophan. Residues 177–179 (GKD), 225–229 (KMSKS), and Lys228 each bind ATP. The 'KMSKS' region signature appears at 225-229 (KMSKS).

It belongs to the class-I aminoacyl-tRNA synthetase family. Homodimer.

It localises to the mitochondrion matrix. It carries out the reaction tRNA(Trp) + L-tryptophan + ATP = L-tryptophyl-tRNA(Trp) + AMP + diphosphate + H(+). The polypeptide is Tryptophan--tRNA ligase, mitochondrial (Schizosaccharomyces pombe (strain 972 / ATCC 24843) (Fission yeast)).